The sequence spans 116 residues: Nucleoid-associated protein PMM0020 (116 aa).

A compositionally biased stretch (basic and acidic residues) spans 87–98 (ESSTTTMKERMN). The interval 87 to 116 (ESSTTTMKERMNDLTGGLNLNLPGLDNNDS) is disordered. Residues 99–116 (DLTGGLNLNLPGLDNNDS) are compositionally biased toward low complexity.

It belongs to the YbaB/EbfC family. As to quaternary structure, homodimer.

It localises to the cytoplasm. Its subcellular location is the nucleoid. In terms of biological role, binds to DNA and alters its conformation. May be involved in regulation of gene expression, nucleoid organization and DNA protection. The chain is Nucleoid-associated protein PMM0020 from Prochlorococcus marinus subsp. pastoris (strain CCMP1986 / NIES-2087 / MED4).